The sequence spans 315 residues: Prephenate dehydratase (315 aa).

One can recognise a Prephenate dehydratase domain in the interval 3 to 189; the sequence is RIAYLGPEGT…ARTRFLLIGV (187 aa). Positions 203 to 280 constitute an ACT domain; that stretch reads SVVLRIANVP…ADVRYLGSWP (78 aa).

Homodimer.

It catalyses the reaction prephenate + H(+) = 3-phenylpyruvate + CO2 + H2O. It participates in amino-acid biosynthesis; L-phenylalanine biosynthesis; phenylpyruvate from prephenate: step 1/1. The sequence is that of Prephenate dehydratase (pheA) from Mycobacterium marinum (strain ATCC BAA-535 / M).